Consider the following 690-residue polypeptide: Eukaryotic translation initiation factor 3 subunit B (690 aa).

A compositionally biased stretch (basic and acidic residues) spans 1 to 11 (MAKKKSEEHSG). Residues 1-33 (MAKKKSEEHSGADANDSDYNEEPNFDDPPGYVD) form a disordered region. Residues 15–25 (NDSDYNEEPNF) show a composition bias toward acidic residues. In terms of domain architecture, RRM spans 57–141 (SVVVVDNMPK…YTFAVNLFTD (85 aa)). WD repeat units lie at residues 207–246 (TRER…KIQK), 292–331 (GDGM…LLDL), 334–369 (IKIA…TLME), 442–484 (EIRE…KPSL), and 530–575 (PDHF…IRRT). Positions 613 to 646 (EQKDRLRLTRASKELLEKRAQLRETFMEYRNKRI) form a coiled coil.

This sequence belongs to the eIF-3 subunit B family. Component of the eukaryotic translation initiation factor 3 (eIF-3) complex. The eIF-3 complex interacts with pix. Interacts with mxt.

Its subcellular location is the cytoplasm. Functionally, RNA-binding component of the eukaryotic translation initiation factor 3 (eIF-3) complex, which is involved in protein synthesis of a specialized repertoire of mRNAs and, together with other initiation factors, stimulates binding of mRNA and methionyl-tRNAi to the 40S ribosome. The eIF-3 complex specifically targets and initiates translation of a subset of mRNAs involved in cell proliferation. The polypeptide is Eukaryotic translation initiation factor 3 subunit B (Drosophila mojavensis (Fruit fly)).